A 449-amino-acid chain; its full sequence is Probable magnetosome protein Mms48 (449 aa).

Positions 1 to 18 (MLLRLIVLLIFMSPVVFA) are cleaved as a signal peptide. The chain crosses the membrane as a helical span at residues 40-60 (SNMPVLLAVILVVFLIFSALS). Residues 323 to 356 (PDGHLAAGEAAFAVQKWGVARRHIMAALKIAPDA) form a TPR repeat.

The protein resides in the magnetosome membrane. Its function is as follows. Overexpression in wild-type cells increases the number of cells with double magnetosome chains significantly. The 4 genes of this operon collectively influence magnetosome size and number. The chain is Probable magnetosome protein Mms48 from Magnetospirillum gryphiswaldense (strain DSM 6361 / JCM 21280 / NBRC 15271 / MSR-1).